The following is a 447-amino-acid chain: Membrane metalloprotease ARASP, chloroplastic (447 aa).

The N-terminal 73 residues, 1 to 73, are a transit peptide targeting the chloroplast; sequence MLLNISSSPI…YPDGERFDFR (73 aa). Residue His102 coordinates Zn(2+). The active site involves Glu103. His106 serves as a coordination point for Zn(2+). Residues 177 to 197 traverse the membrane as a helical segment; that stretch reads SIVVSAGIIANVIFAYAIIFV. One can recognise a PDZ domain in the interval 202–244; that stretch reads VGLPVQEAFPGVLVPEVKTFSAASRDGLLSGDVILAVDGTELS. 2 consecutive transmembrane segments (helical) span residues 379–399 and 413–433; these read LAVI…ALIL and VEQG…LFLI.

This sequence belongs to the peptidase M50A family. It depends on Zn(2+) as a cofactor. Expressed in green seedlings and cotyledons. Low levels of expression in roots, siliques and seeds.

The protein localises to the plastid. It is found in the chloroplast inner membrane. Functionally, metalloprotease essential for chloroplast and plant development. May be involved in regulated intramembrane proteolysis (RIP). This is Membrane metalloprotease ARASP, chloroplastic from Arabidopsis thaliana (Mouse-ear cress).